Consider the following 159-residue polypeptide: Mediator of RNA polymerase II transcription subunit 10 (159 aa).

Residues 54–77 (STHTKPQPPSQDDEQKGSANDPLL) form a disordered region.

This sequence belongs to the Mediator complex subunit 10 family. As to quaternary structure, component of the Mediator complex.

It localises to the nucleus. Functionally, component of the Mediator complex, a coactivator involved in the regulated transcription of nearly all RNA polymerase II-dependent genes. Mediator functions as a bridge to convey information from gene-specific regulatory proteins to the basal RNA polymerase II transcription machinery. Mediator is recruited to promoters by direct interactions with regulatory proteins and serves as a scaffold for the assembly of a functional preinitiation complex with RNA polymerase II and the general transcription factors. This Aspergillus fumigatus (strain ATCC MYA-4609 / CBS 101355 / FGSC A1100 / Af293) (Neosartorya fumigata) protein is Mediator of RNA polymerase II transcription subunit 10 (nut2).